We begin with the raw amino-acid sequence, 215 residues long: Adenylate kinase (215 aa).

10-15 (GAGKGT) is a binding site for ATP. The tract at residues 30 to 59 (STGDMFRKAIKEETELGKEAKSYMDRGELV) is NMP. AMP is bound by residues threonine 31, arginine 36, 57–59 (ELV), 85–88 (GFPR), and glutamine 92. Positions 126-163 (GRRICESCGTTYHLVFNPPKVEGICDIDGGKLYQREDD) are LID. Arginine 127 contacts ATP. Residues cysteine 130 and cysteine 133 each contribute to the Zn(2+) site. Residue 136–137 (TY) participates in ATP binding. The Zn(2+) site is built by cysteine 150 and aspartate 153. 2 residues coordinate AMP: arginine 160 and arginine 171. Lysine 199 serves as a coordination point for ATP.

This sequence belongs to the adenylate kinase family. Monomer.

It is found in the cytoplasm. It carries out the reaction AMP + ATP = 2 ADP. Its pathway is purine metabolism; AMP biosynthesis via salvage pathway; AMP from ADP: step 1/1. Catalyzes the reversible transfer of the terminal phosphate group between ATP and AMP. Plays an important role in cellular energy homeostasis and in adenine nucleotide metabolism. This is Adenylate kinase from Staphylococcus aureus (strain COL).